A 455-amino-acid polypeptide reads, in one-letter code: Tryptophan dimethylallyltransferase (455 aa).

L-tryptophan contacts are provided by residues 79–80 (VL) and E88. Residues R99, K186, and Y188 each coordinate substrate. L-tryptophan contacts are provided by Y190 and R256. Positions 269, 271, 273, 355, 357, 421, and 425 each coordinate substrate.

It belongs to the tryptophan dimethylallyltransferase family. As to quaternary structure, homodimer.

The catalysed reaction is L-tryptophan + dimethylallyl diphosphate = 4-(3-methylbut-2-enyl)-L-tryptophan + diphosphate. Its pathway is alkaloid biosynthesis; ergot alkaloid biosynthesis. Its function is as follows. Tryptophan dimethylallyltransferase; part of the gene cluster that mediates the biosynthesis of fungal ergot alkaloid. DmaW catalyzes the first step of ergot alkaloid biosynthesis by condensing dimethylallyl diphosphate (DMAP) and tryptophan to form 4-dimethylallyl-L-tryptophan. The second step is catalyzed by the methyltransferase easF that methylates 4-dimethylallyl-L-tryptophan in the presence of S-adenosyl-L-methionine, resulting in the formation of 4-dimethylallyl-L-abrine. The catalase easC and the FAD-dependent oxidoreductase easE then transform 4-dimethylallyl-L-abrine to chanoclavine-I which is further oxidized by easD in the presence of NAD(+), resulting in the formation of chanoclavine-I aldehyde. Agroclavine dehydrogenase easG then mediates the conversion of chanoclavine-I aldehyde to agroclavine via a non-enzymatic adduct reaction: the substrate is an iminium intermediate that is formed spontaneously from chanoclavine-I aldehyde in the presence of glutathione. Further conversion of agroclavine to paspalic acid is a two-step process involving oxidation of agroclavine to elymoclavine and of elymoclavine to paspalic acid, the second step being performed by the elymoclavine oxidase cloA. However, cloA does not encode a functional enzyme indicating that C.fusiformis terminates its ergot alkaloid pathway at elymoclavine. In Claviceps fusiformis (Ergot fungus), this protein is Tryptophan dimethylallyltransferase.